The chain runs to 343 residues: MVSIMPKILYNPEVLGHKPKSYHVENPERVLTILNSLKSNGFDDIVLIEGKSTINEILEIHSRDYVYSIINLSKSFNYYDGDTYLCDRTLDAALTAFKLAKEAVKLALKDRDLYFALTRPPGHHAGISGRALGAMSNGFCIFNNIAGAARLAKNYMKKVIIIDFDVHHGNGTQEIFWNDNRVIHIDFHQRGIYPGTGDILDIGGEEAKGTKINLPFPAHSTDADYIFAWNEIVEPILNYFSPDTVLVSAGFDAFINDGLASMDLTETFYRFVGAKLSGYSVTAVLEGGYSIGLKYAPPAFLDGYVDAKDVLDNLEDYTVINSNEVKSMVKNVKKIIGEYLDIF.

The protein belongs to the histone deacetylase family.

Its function is as follows. Putative deacetylase. This is an uncharacterized protein from Methanocaldococcus jannaschii (strain ATCC 43067 / DSM 2661 / JAL-1 / JCM 10045 / NBRC 100440) (Methanococcus jannaschii).